The primary structure comprises 333 residues: MVRMTAVCTAKTVSPVPSTRKEFKGAIAELRKKLNAVILAHYYQDPEIQDIADFIGDSLELSRRAASTNADVIVFCGVHFMAETAKILSPEKIVLLPDLEAGCSLADDCPADEFAAFRDKHPDHIVVSYINCTAAVKAQSDLICTSSNAVALVSQLPKDRPILFAPDQNLGRWVQKQSGRELTIWPGRCMVHETFSEEALLKLKMMHPEAKVIAHPECLERLLELADYVGSTSKLLEYTETNPGTKFIVLTEPGILHQMKQRMPNKEFMDVPGIDGCSCNECPYMRLNTLEKLWRCLSTMKPSIEIEEGVRQKALIPIQRMLNMKEKQEASQH.

Positions 41 and 58 each coordinate iminosuccinate. Position 103 (C103) interacts with [4Fe-4S] cluster. Residues 129–131 (YIN) and S146 contribute to the iminosuccinate site. C189 lines the [4Fe-4S] cluster pocket. Residues 215–217 (HPE) and T232 contribute to the iminosuccinate site. C282 lines the [4Fe-4S] cluster pocket.

This sequence belongs to the quinolinate synthase family. Type 2 subfamily. It depends on [4Fe-4S] cluster as a cofactor.

It is found in the cytoplasm. It carries out the reaction iminosuccinate + dihydroxyacetone phosphate = quinolinate + phosphate + 2 H2O + H(+). It participates in cofactor biosynthesis; NAD(+) biosynthesis; quinolinate from iminoaspartate: step 1/1. Functionally, catalyzes the condensation of iminoaspartate with dihydroxyacetone phosphate to form quinolinate. This chain is Quinolinate synthase, found in Prochlorococcus marinus (strain MIT 9303).